Here is a 170-residue protein sequence, read N- to C-terminus: Keratin-associated protein 9-2 (170 aa).

17 repeat units span residues 8–12 (CCQPT), 13–17 (CCRTT), 18–22 (CCRTT), 37–41 (CCQPT), 42–46 (CCVSS), 51–55 (CCCPT), 61–65 (CCRTT), 66–70 (CCQPT), 75–79 (CYQPS), 80–84 (CCSTP), 85–89 (CCQPT), 90–94 (CCGSS), 95–99 (CCGQT), 140–144 (CCHPA), 145–149 (CCETT), 150–154 (CCRTT), and 164–168 (CCQPS). Residues 8-168 (CCQPTCCRTT…TCVSSCCQPS (161 aa)) form a 17 X 5 AA repeats of C-C-[RQVSGE]-[SPTQ]-[TASP] region.

It belongs to the KRTAP type 9 family. Interacts with hair keratins.

Functionally, in the hair cortex, hair keratin intermediate filaments are embedded in an interfilamentous matrix, consisting of hair keratin-associated proteins (KRTAP), which are essential for the formation of a rigid and resistant hair shaft through their extensive disulfide bond cross-linking with abundant cysteine residues of hair keratins. The matrix proteins include the high-sulfur and high-glycine-tyrosine keratins. The chain is Keratin-associated protein 9-2 (KRTAP9-2) from Pan troglodytes (Chimpanzee).